The primary structure comprises 684 residues: Homoaconitase, mitochondrial (684 aa).

[4Fe-4S] cluster contacts are provided by Cys337, Cys397, and Cys400.

This sequence belongs to the aconitase/IPM isomerase family. It depends on [4Fe-4S] cluster as a cofactor.

It is found in the mitochondrion. It catalyses the reaction (2R,3S)-homoisocitrate = cis-homoaconitate + H2O. The protein operates within amino-acid biosynthesis; L-lysine biosynthesis via AAA pathway; L-alpha-aminoadipate from 2-oxoglutarate: step 3/5. Functionally, catalyzes the reversible hydration of cis-homoaconitate to (2R,3S)-homoisocitrate, a step in the alpha-aminoadipate pathway for lysine biosynthesis. This is Homoaconitase, mitochondrial (LYS4) from Candida albicans (strain SC5314 / ATCC MYA-2876) (Yeast).